A 317-amino-acid polypeptide reads, in one-letter code: Large ribosomal subunit protein uL10 (317 aa).

The disordered stretch occupies residues 286–317 (AGAGAAAEKKEEAKKEESESEEDDDMGFGLFD). The segment covering 292–302 (AEKKEEAKKEE) has biased composition (basic and acidic residues).

The protein belongs to the universal ribosomal protein uL10 family. As to quaternary structure, P0 forms a pentameric complex by interaction with dimers of P1 and P2. In terms of processing, phosphorylated.

In terms of biological role, ribosomal protein P0 is the functional equivalent of E.coli protein L10. This Ceratitis capitata (Mediterranean fruit fly) protein is Large ribosomal subunit protein uL10 (RpLP0).